The chain runs to 122 residues: Small ribosomal subunit protein uS13 (122 aa).

The disordered stretch occupies residues 95–122 (GLPVRGQKTKTNARTRKGPKRTVANKKK).

The protein belongs to the universal ribosomal protein uS13 family. Part of the 30S ribosomal subunit. Forms a loose heterodimer with protein S19. Forms two bridges to the 50S subunit in the 70S ribosome.

Located at the top of the head of the 30S subunit, it contacts several helices of the 16S rRNA. In the 70S ribosome it contacts the 23S rRNA (bridge B1a) and protein L5 of the 50S subunit (bridge B1b), connecting the 2 subunits; these bridges are implicated in subunit movement. Contacts the tRNAs in the A and P-sites. The protein is Small ribosomal subunit protein uS13 of Agathobacter rectalis (strain ATCC 33656 / DSM 3377 / JCM 17463 / KCTC 5835 / VPI 0990) (Eubacterium rectale).